Here is a 166-residue protein sequence, read N- to C-terminus: Succinate dehydrogenase assembly factor 2, mitochondrial (166 aa).

The N-terminal 29 residues, 1–29, are a transit peptide targeting the mitochondrion; the sequence is MAVVAVFPALARMLAVSRRRLVSPSLSMT.

Belongs to the SDHAF2 family. In terms of assembly, interacts with SDHA within the SDH catalytic dimer.

The protein resides in the mitochondrion matrix. In terms of biological role, plays an essential role in the assembly of succinate dehydrogenase (SDH), an enzyme complex (also referred to as respiratory complex II) that is a component of both the tricarboxylic acid (TCA) cycle and the mitochondrial electron transport chain, and which couples the oxidation of succinate to fumarate with the reduction of ubiquinone (coenzyme Q) to ubiquinol. Required for flavinylation (covalent attachment of FAD) of the flavoprotein subunit SDHA of the SDH catalytic dimer. The sequence is that of Succinate dehydrogenase assembly factor 2, mitochondrial from Bos taurus (Bovine).